The sequence spans 1052 residues: Error-prone DNA polymerase (1052 aa).

It belongs to the DNA polymerase type-C family. DnaE2 subfamily.

Its subcellular location is the cytoplasm. The enzyme catalyses DNA(n) + a 2'-deoxyribonucleoside 5'-triphosphate = DNA(n+1) + diphosphate. In terms of biological role, DNA polymerase involved in damage-induced mutagenesis and translesion synthesis (TLS). It is not the major replicative DNA polymerase. In Bordetella bronchiseptica (strain ATCC BAA-588 / NCTC 13252 / RB50) (Alcaligenes bronchisepticus), this protein is Error-prone DNA polymerase.